Here is a 96-residue protein sequence, read N- to C-terminus: Prokineticin Bm8-a (96 aa).

A signal peptide spans Met-1 to Gly-19. Cystine bridges form between Cys-26/Cys-38, Cys-32/Cys-50, Cys-37/Cys-78, Cys-60/Cys-86, and Cys-80/Cys-95.

It belongs to the AVIT (prokineticin) family. Expressed by the skin glands.

The protein resides in the secreted. Its function is as follows. Potent agonist for both PKR1/PROKR1 and PKR2/PROKR2, and inducer of a potent and long-lasting hyperalgesia. Also potentiates capsaicin-induced TRPV1 current, when tested on DRG neurons. At subnanomolar concentrations, this protein both induces potent chemotaxis of macrophages and stimulates LPS-induced production of the pro-inflammatory cytokines IL-1 and IL-12. In vivo, potently stimulates the contraction of the guinea-pig gastrointestinal (GI) smooth muscle (nanomolar concentration). The chain is Prokineticin Bm8-a from Bombina maxima (Giant fire-bellied toad).